The chain runs to 172 residues: Large ribosomal subunit protein uL10 (172 aa).

This sequence belongs to the universal ribosomal protein uL10 family. In terms of assembly, part of the ribosomal stalk of the 50S ribosomal subunit. The N-terminus interacts with L11 and the large rRNA to form the base of the stalk. The C-terminus forms an elongated spine to which L12 dimers bind in a sequential fashion forming a multimeric L10(L12)X complex.

Functionally, forms part of the ribosomal stalk, playing a central role in the interaction of the ribosome with GTP-bound translation factors. The chain is Large ribosomal subunit protein uL10 from Beijerinckia indica subsp. indica (strain ATCC 9039 / DSM 1715 / NCIMB 8712).